An 83-amino-acid polypeptide reads, in one-letter code: Short neurotoxin II (83 aa).

Positions 1–21 (MKTLLLTLVVVTVVCLDLGYT) are cleaved as a signal peptide. Disulfide bonds link Cys24–Cys45, Cys38–Cys62, Cys64–Cys75, and Cys76–Cys81.

The protein belongs to the three-finger toxin family. Short-chain subfamily. Type I alpha-neurotoxin sub-subfamily. In terms of tissue distribution, expressed by the venom gland.

The protein resides in the secreted. Binds to muscle nicotinic acetylcholine receptor (nAChR) and inhibit acetylcholine from binding to the receptor, thereby impairing neuromuscular transmission. The sequence is that of Short neurotoxin II from Laticauda colubrina (Yellow-lipped sea krait).